The sequence spans 535 residues: CTP synthase (535 aa).

The tract at residues Met-1–Leu-267 is amidoligase domain. Ser-13 is a CTP binding site. Ser-13 is a UTP binding site. Position 14–19 (Ser-14–Ile-19) interacts with ATP. Residue Tyr-54 coordinates L-glutamine. Asp-71 is an ATP binding site. The Mg(2+) site is built by Asp-71 and Glu-141. CTP contacts are provided by residues Asp-148 to Glu-150, Lys-188 to Gln-193, and Lys-224. UTP is bound by residues Lys-188–Gln-193 and Lys-224. Arg-240 to Ala-242 lines the ATP pocket. A Glutamine amidotransferase type-1 domain is found at Thr-293 to Lys-535. Gly-355 contacts L-glutamine. The active-site Nucleophile; for glutamine hydrolysis is the Cys-382. Residues Leu-383 to Gln-386, Glu-406, and Arg-463 each bind L-glutamine. Residues His-508 and Glu-510 contribute to the active site.

It belongs to the CTP synthase family. Homotetramer.

The enzyme catalyses UTP + L-glutamine + ATP + H2O = CTP + L-glutamate + ADP + phosphate + 2 H(+). It carries out the reaction L-glutamine + H2O = L-glutamate + NH4(+). It catalyses the reaction UTP + NH4(+) + ATP = CTP + ADP + phosphate + 2 H(+). Its pathway is pyrimidine metabolism; CTP biosynthesis via de novo pathway; CTP from UDP: step 2/2. Its activity is regulated as follows. Allosterically activated by GTP, when glutamine is the substrate; GTP has no effect on the reaction when ammonia is the substrate. The allosteric effector GTP functions by stabilizing the protein conformation that binds the tetrahedral intermediate(s) formed during glutamine hydrolysis. Inhibited by the product CTP, via allosteric rather than competitive inhibition. Functionally, catalyzes the ATP-dependent amination of UTP to CTP with either L-glutamine or ammonia as the source of nitrogen. Regulates intracellular CTP levels through interactions with the four ribonucleotide triphosphates. The sequence is that of CTP synthase from Staphylococcus epidermidis (strain ATCC 35984 / DSM 28319 / BCRC 17069 / CCUG 31568 / BM 3577 / RP62A).